The sequence spans 473 residues: 3-isopropylmalate dehydratase large subunit (473 aa).

Residues 289–319 (TVTWGTTPGQTAGITEPIPDPDDLPEEDRDT) are disordered. Residues 291–301 (TWGTTPGQTAG) show a composition bias toward polar residues. Residues 307 to 317 (PDPDDLPEEDR) are compositionally biased toward acidic residues. Residues Cys-348, Cys-408, and Cys-411 each contribute to the [4Fe-4S] cluster site.

It belongs to the aconitase/IPM isomerase family. LeuC type 1 subfamily. As to quaternary structure, heterodimer of LeuC and LeuD. Requires [4Fe-4S] cluster as cofactor.

It carries out the reaction (2R,3S)-3-isopropylmalate = (2S)-2-isopropylmalate. The protein operates within amino-acid biosynthesis; L-leucine biosynthesis; L-leucine from 3-methyl-2-oxobutanoate: step 2/4. Catalyzes the isomerization between 2-isopropylmalate and 3-isopropylmalate, via the formation of 2-isopropylmaleate. This chain is 3-isopropylmalate dehydratase large subunit, found in Halorubrum lacusprofundi (strain ATCC 49239 / DSM 5036 / JCM 8891 / ACAM 34).